The primary structure comprises 350 residues: Uroporphyrinogen decarboxylase (350 aa).

Residues 23–27 (RQAGR), Asp72, Tyr149, Ser204, and His318 each bind substrate.

This sequence belongs to the uroporphyrinogen decarboxylase family. As to quaternary structure, homodimer.

The protein localises to the cytoplasm. The enzyme catalyses uroporphyrinogen III + 4 H(+) = coproporphyrinogen III + 4 CO2. It participates in porphyrin-containing compound metabolism; protoporphyrin-IX biosynthesis; coproporphyrinogen-III from 5-aminolevulinate: step 4/4. Catalyzes the decarboxylation of four acetate groups of uroporphyrinogen-III to yield coproporphyrinogen-III. The chain is Uroporphyrinogen decarboxylase from Carboxydothermus hydrogenoformans (strain ATCC BAA-161 / DSM 6008 / Z-2901).